Consider the following 330-residue polypeptide: Ferredoxin--NADP reductase (330 aa).

Positions 19, 38, 46, 51, 91, 129, 286, and 327 each coordinate FAD.

The protein belongs to the ferredoxin--NADP reductase type 2 family. Homodimer. FAD is required as a cofactor.

It catalyses the reaction 2 reduced [2Fe-2S]-[ferredoxin] + NADP(+) + H(+) = 2 oxidized [2Fe-2S]-[ferredoxin] + NADPH. The chain is Ferredoxin--NADP reductase from Nocardioides sp. (strain ATCC BAA-499 / JS614).